A 682-amino-acid chain; its full sequence is Potassium-transporting ATPase ATP-binding subunit (682 aa).

4 consecutive transmembrane segments (helical) span residues proline 34 to alanine 54, alanine 62 to alanine 82, isoleucine 219 to leucine 239, and valine 254 to isoleucine 274. Aspartate 307 (4-aspartylphosphate intermediate) is an active-site residue. ATP-binding positions include aspartate 344, glutamate 348, phenylalanine 377–serine 384, and lysine 395. Mg(2+)-binding residues include aspartate 518 and aspartate 522. The next 3 membrane-spanning stretches (helical) occupy residues phenylalanine 588–methionine 608, alanine 616–leucine 636, and isoleucine 656–leucine 676.

This sequence belongs to the cation transport ATPase (P-type) (TC 3.A.3) family. Type IA subfamily. The system is composed of three essential subunits: KdpA, KdpB and KdpC.

The protein localises to the cell inner membrane. The enzyme catalyses K(+)(out) + ATP + H2O = K(+)(in) + ADP + phosphate + H(+). In terms of biological role, part of the high-affinity ATP-driven potassium transport (or Kdp) system, which catalyzes the hydrolysis of ATP coupled with the electrogenic transport of potassium into the cytoplasm. This subunit is responsible for energy coupling to the transport system and for the release of the potassium ions to the cytoplasm. This chain is Potassium-transporting ATPase ATP-binding subunit, found in Escherichia coli O17:K52:H18 (strain UMN026 / ExPEC).